A 101-amino-acid polypeptide reads, in one-letter code: Small ribosomal subunit protein uS14 (101 aa).

The protein belongs to the universal ribosomal protein uS14 family. Part of the 30S ribosomal subunit. Contacts proteins S3 and S10.

Binds 16S rRNA, required for the assembly of 30S particles and may also be responsible for determining the conformation of the 16S rRNA at the A site. This Pseudomonas aeruginosa (strain LESB58) protein is Small ribosomal subunit protein uS14.